The primary structure comprises 4655 residues: Low-density lipoprotein receptor-related protein 2 (4655 aa).

A signal peptide spans 1–25; the sequence is MDRGPAAVACTLLLALVACLAPASG. At 26 to 4423 the chain is on the extracellular side; it reads QECDSAHFRC…FSKGISPGTT (4398 aa). 7 consecutive LDL-receptor class A domains span residues 27–63, 66–104, 107–143, 146–180, 182–218, 221–257, and 265–308; these read ECDS…IGCA, TCQQ…QDCS, TCSS…NDCQ, TCEQ…INCT, ICLH…HACN, TCGG…DGCE, and KCSP…KYCS. 21 disulfide bridges follow: Cys-28-Cys-40, Cys-35-Cys-53, Cys-47-Cys-62, Cys-67-Cys-80, Cys-74-Cys-93, Cys-87-Cys-103, Cys-108-Cys-120, Cys-115-Cys-133, Cys-127-Cys-142, Cys-147-Cys-157, Cys-152-Cys-170, Cys-164-Cys-179, Cys-183-Cys-195, Cys-190-Cys-208, Cys-202-Cys-217, Cys-222-Cys-234, Cys-229-Cys-247, Cys-241-Cys-256, Cys-266-Cys-279, Cys-273-Cys-292, and Cys-286-Cys-307. N-linked (GlcNAc...) asparagine glycosylation is found at Asn-159 and Asn-178. N-linked (GlcNAc...) asparagine glycans are attached at residues Asn-299, Asn-300, Asn-341, Asn-388, and Asn-463. 8 LDL-receptor class B repeats span residues 436-478, 479-521, 522-568, 569-613, 753-795, 796-837, 838-881, and 882-925; these read QRVF…DWVN, NKIY…DPTV, GYLF…DMIS, KRVY…FEGQ, STIF…DWIS, KNLY…HPFA, GYLF…DWAA, and SRLY…FGEH. N-linked (GlcNAc...) asparagine glycosylation is present at Asn-866. The LDL-receptor class A 8 domain occupies 1025-1061; sequence QCGLFSFPCKNGRCVPNYYLCDGVDDCHDNSDEQLCG. Cystine bridges form between Cys-1026–Cys-1038, Cys-1033–Cys-1051, and Cys-1045–Cys-1060. N-linked (GlcNAc...) asparagine glycosylation occurs at Asn-1064. LDL-receptor class A domains are found at residues 1066-1102, 1108-1144, 1148-1184, 1186-1223, 1229-1267, 1270-1306, and 1304-1349; these read TCSS…HNCP, SCLD…KNCN, TCQP…VGCV, NCTA…AGCP, MCHS…NACV, TCPS…KDCP, and DCPT…PLCN. Cystine bridges form between Cys-1067-Cys-1079, Cys-1074-Cys-1092, Cys-1086-Cys-1101, Cys-1109-Cys-1121, Cys-1116-Cys-1134, and Cys-1128-Cys-1143. Ca(2+)-binding residues include Trp-1126, Asp-1129, Asp-1131, Asp-1133, Asp-1139, and Glu-1140. Residue Asn-1144 is glycosylated (N-linked (GlcNAc...) asparagine). 3 disulfides stabilise this stretch: Cys-1149–Cys-1161, Cys-1156–Cys-1174, and Cys-1168–Cys-1183. N-linked (GlcNAc...) asparagine glycosylation occurs at Asn-1186. 12 disulfides stabilise this stretch: Cys-1187/Cys-1200, Cys-1194/Cys-1213, Cys-1207/Cys-1222, Cys-1230/Cys-1243, Cys-1237/Cys-1256, Cys-1250/Cys-1266, Cys-1271/Cys-1283, Cys-1278/Cys-1296, Cys-1290/Cys-1305, Cys-1305/Cys-1325, Cys-1312/Cys-1338, and Cys-1332/Cys-1348. Ca(2+) contacts are provided by Asp-1208, Val-1210, Asp-1212, Asp-1218, and Glu-1219. 3 N-linked (GlcNAc...) asparagine glycosylation sites follow: Asn-1327, Asn-1340, and Asn-1383. The region spanning 1390 to 1429 is the EGF-like 1; calcium-binding domain; that stretch reads DIDECDILGSCSQHCYNMRGSFRCSCDTGYMLESDGRTCK. Intrachain disulfides connect Cys-1394-Cys-1404, Cys-1400-Cys-1413, and Cys-1415-Cys-1428. Residues Asn-1464, Asn-1496, and Asn-1550 are each glycosylated (N-linked (GlcNAc...) asparagine). 5 LDL-receptor class B repeats span residues 1478 to 1520, 1521 to 1563, 1566 to 1609, 1610 to 1654, and 1655 to 1695; these read GRIF…DWVG, RNLY…DPRM, HLLF…DYPN, RLLY…FEDS, and VYWT…VHPS. Asn-1675 carries an N-linked (GlcNAc...) asparagine glycan. In terms of domain architecture, EGF-like 2 spans 1700–1741; it reads SVNPCAFSRCSHLCLLSSQGPHFYSCVCPSGWSLSPDLLNCL. Cystine bridges form between Cys-1704–Cys-1713, Cys-1709–Cys-1725, and Cys-1727–Cys-1740. LDL-receptor class B repeat units lie at residues 1790–1832, 1833–1882, 1883–1930, 1931–1972, and 1973–2013; these read QYIY…DWIS, RNLY…DPAR, GKLY…DIEE, QKLY…HDSF, and LYYT…YHRR. N-linked (GlcNAc...) asparagine glycosylation occurs at Asn-1810. Asn-2055 is a glycosylation site (N-linked (GlcNAc...) asparagine). LDL-receptor class B repeat units follow at residues 2107–2156, 2157–2201, 2202–2245, 2246–2289, 2431–2477, 2478–2518, 2519–2562, 2563–2604, and 2605–2646; these read GFIY…DWVA, GNLY…DPKN, RYLF…DRSD, GYVY…FENS, DRIY…DWIT, RRIY…DPCQ, GYLY…DYEE, DLLY…YGQY, and IYWT…VVKN. N-linked (GlcNAc...) asparagine glycosylation is found at Asn-2177 and Asn-2224. Residues Asn-2499 and Asn-2547 are each glycosylated (N-linked (GlcNAc...) asparagine). 10 consecutive LDL-receptor class A domains span residues 2699 to 2737, 2740 to 2776, 2779 to 2818, 2821 to 2860, 2863 to 2900, 2905 to 2944, 2947 to 2989, 2992 to 3028, 3031 to 3069, and 3074 to 3110; these read RCGA…SVCA, TCSP…AGCL, DCNA…KNCP, TCQS…TYCT, TCSS…ASCG, TCLA…HQCQ, NCSD…QNCT, TCSE…RGCL, TCQQ…HLCH, and TCPP…KGCG. Disulfide bonds link Cys-2700–Cys-2712, Cys-2707–Cys-2725, Cys-2719–Cys-2736, Cys-2741–Cys-2753, Cys-2748–Cys-2766, Cys-2760–Cys-2775, Cys-2780–Cys-2793, Cys-2788–Cys-2806, Cys-2800–Cys-2817, Cys-2822–Cys-2835, Cys-2829–Cys-2848, Cys-2842–Cys-2859, Cys-2864–Cys-2876, Cys-2871–Cys-2889, Cys-2883–Cys-2899, Cys-2906–Cys-2918, Cys-2913–Cys-2931, and Cys-2925–Cys-2943. The N-linked (GlcNAc...) asparagine glycan is linked to Asn-2781. N-linked (GlcNAc...) asparagine glycans are attached at residues Asn-2809 and Asn-2810. A glycan (N-linked (GlcNAc...) asparagine) is linked at Asn-2947. 18 cysteine pairs are disulfide-bonded: Cys-2948–Cys-2965, Cys-2955–Cys-2978, Cys-2972–Cys-2988, Cys-2993–Cys-3005, Cys-3000–Cys-3018, Cys-3012–Cys-3027, Cys-3032–Cys-3044, Cys-3039–Cys-3057, Cys-3051–Cys-3068, Cys-3075–Cys-3087, Cys-3082–Cys-3100, Cys-3094–Cys-3109, Cys-3114–Cys-3126, Cys-3122–Cys-3135, Cys-3137–Cys-3150, Cys-3156–Cys-3167, Cys-3163–Cys-3176, and Cys-3178–Cys-3191. Asn-2987 carries N-linked (GlcNAc...) asparagine glycosylation. One can recognise an EGF-like 3 domain in the interval 3110 to 3151; it reads GINECHDPSISGCDHNCTDTLTSFYCSCRPGYKLMSDKRTCV. An N-linked (GlcNAc...) asparagine glycan is attached at Asn-3125. Residues 3152–3192 enclose the EGF-like 4; calcium-binding domain; that stretch reads DIDECTEMPFVCSQKCENVIGSYICKCAPGYLREPDGKTCR. Residues Asn-3211, Asn-3257, Asn-3315, and Asn-3355 are each glycosylated (N-linked (GlcNAc...) asparagine). LDL-receptor class B repeat units lie at residues 3239–3281, 3282–3324, 3333–3376, 3377–3419, and 3420–3460; these read KRLY…DWVS, RKLY…DNPR, GYLY…DYTN, DLLY…FEDT, and IYWT…YHPY. N-linked (GlcNAc...) asparagine glycosylation occurs at Asn-3446. 11 LDL-receptor class A domains span residues 3511 to 3549, 3552 to 3590, 3593 to 3631, 3634 to 3672, 3677 to 3715, 3718 to 3755, 3758 to 3794, 3797 to 3833, 3841 to 3879, 3882 to 3921, and 3927 to 3963; these read MCSS…ALCP, FCRL…LLCE, HCDS…SHCA, TCRP…EECM, LCDN…QGCE, TCHP…ENCA, ECTE…RDCE, TCHP…ADCP, YCQA…HLCL, PCNS…EHCR, and PCTE…LGCN. 33 disulfides stabilise this stretch: Cys-3512/Cys-3525, Cys-3519/Cys-3538, Cys-3532/Cys-3548, Cys-3553/Cys-3565, Cys-3560/Cys-3578, Cys-3572/Cys-3589, Cys-3594/Cys-3606, Cys-3601/Cys-3619, Cys-3613/Cys-3630, Cys-3635/Cys-3647, Cys-3642/Cys-3660, Cys-3654/Cys-3671, Cys-3678/Cys-3692, Cys-3686/Cys-3705, Cys-3699/Cys-3714, Cys-3719/Cys-3732, Cys-3727/Cys-3745, Cys-3739/Cys-3754, Cys-3759/Cys-3771, Cys-3766/Cys-3784, Cys-3778/Cys-3793, Cys-3798/Cys-3810, Cys-3805/Cys-3823, Cys-3817/Cys-3832, Cys-3842/Cys-3854, Cys-3849/Cys-3867, Cys-3861/Cys-3878, Cys-3883/Cys-3896, Cys-3891/Cys-3909, Cys-3903/Cys-3920, Cys-3928/Cys-3940, Cys-3935/Cys-3953, and Cys-3947/Cys-3962. N-linked (GlcNAc...) asparagine glycosylation is present at Asn-3564. An N-linked (GlcNAc...) asparagine glycan is attached at Asn-3680. Asn-3978 is a glycosylation site (N-linked (GlcNAc...) asparagine). Positions 4007 to 4048 constitute an EGF-like 5; calcium-binding domain; the sequence is DINECEQFGTCPQHCRNTKGSYECVCADGFTSMSDRPGKRCA. Disulfide bonds link Cys-4011-Cys-4021, Cys-4017-Cys-4030, and Cys-4032-Cys-4047. Asn-4068 carries an N-linked (GlcNAc...) asparagine glycan. LDL-receptor class B repeat units lie at residues 4154–4196, 4197–4240, and 4242–4283; these read RHIY…NPKL, GLMF…DYLN, and DRIY…FEDQ. N-linked (GlcNAc...) asparagine glycosylation is present at Asn-4327. The EGF-like 6 domain occupies 4377–4411; the sequence is LPPPCRCMHGGNCYFDETDLPKCKCPSGYTGKYCE. Disulfide bonds link Cys-4381–Cys-4389, Cys-4383–Cys-4399, and Cys-4401–Cys-4410. The helical transmembrane segment at 4424 to 4446 threads the bilayer; the sequence is AVAVLLTILLIVVIGALAIAGFF. The Cytoplasmic segment spans residues 4447-4655; the sequence is HYRRTGSLLP…ANLVKEDSEV (209 aa). The SH3-binding signature appears at 4453–4462; that stretch reads SLLPALPKLP. The short motif at 4456-4461 is the PxLPxI/L motif 1; mediates interaction with ANKRA2 element; that stretch reads PALPKL. Residues 4459-4464 carry the PxLPxI/L motif 2; mediates interaction with ANKRA2 motif; sequence PKLPSL. Ser-4463 and Ser-4466 each carry phosphoserine. Residues 4521 to 4526 carry the Endocytosis signal motif; that stretch reads FENPMY. Residues 4550 to 4574 are disordered; sequence KNYGSPINPSEIVPETNPTSPAADG. The span at 4565 to 4574 shows a compositional bias: polar residues; it reads TNPTSPAADG. Ser-4569 is subject to Phosphoserine. The tract at residues 4589-4602 is interaction with DAB2; sequence QTTNFENPIYAQME. The NPXY motif signature appears at 4595-4598; the sequence is NPIY. The SH2-binding motif lies at 4598-4601; the sequence is YAQM. Residues 4601–4655 are disordered; it reads MENEQKESVAATPPPSPSLPAKPKPPSRRDPTPTYSATEDTFKDTANLVKEDSEV. The SH3-binding motif lies at 4611–4622; that stretch reads ATPPPSPSLPAK. Residues 4612-4624 are compositionally biased toward pro residues; it reads TPPPSPSLPAKPK. Ser-4616 bears the Phosphoserine mark. Thr-4632 is modified (phosphothreonine). Ser-4653 is modified (phosphoserine).

It belongs to the LDLR family. In terms of assembly, binds plasminogen, extracellular matrix components, plasminogen activator-plasminogen activator inhibitor type I complex, apolipoprotein E-enriched beta-VLDL, lipoprotein lipase, lactoferrin, CLU/clusterin and calcium. Forms a multimeric complex together with LRPAP1. Interacts (via PxLPxI/L motif) with ANKRA2 (via ankyrin repeats). Interacts with LRP2BP. Interacts (via NPXY motif) with DAB2; the interaction is not affected by tyrosine phosphorylation of the NPXY motif. Interacts with MB. Interacts with BMP4. Interacts with the Sonic hedgehog protein N-product which is the active product of SHH. Interacts with CST3 in a calcium-dependent manner. Interacts with the vitamin-D binding protein GC/DBP. Interacts with sex hormone-binding protein SHBG. Interacts with angiotensin-2. Also interacts with angiotensin 1-7. Interacts with APOM. Interacts with selenoprotein SEPP1. Interacts with LEP. Interacts with ALB. Interacts with the antiapoptotic protein BIRC5/survivin. Interacts with matrix metalloproteinase MMP2 in complex with metalloproteinase inhibitor TIMP1. In neurons, forms a trimeric complex with APP and APPB1/FE65. Interacts with LDLRAP1/ARH; mediates trafficking of LRP2 to the endocytic recycling compartment. Does not interact with beta-amyloid protein 40 alone but interacts with the complex composed of beta-amyloid protein 40 and CLU/APOJ. Interacts with MDK. Post-translationally, a fraction undergoes proteolytic cleavage of the extracellular domain at the cell membrane to generate a cytoplasmic tail fragment. This is internalized into the early endosome from where it trafficks in an LDLRAP1/ARH-dependent manner to the endocytic recycling compartment (ERC). In the ERC, it is further cleaved by gamma-secretase to release a fragment which translocates to the nucleus and mediates transcriptional repression. In terms of processing, N-glycosylation is required for ligand binding. In terms of tissue distribution, expressed in first and third trimester cytotrophoblasts in the placenta (at protein level). Absorptive epithelia, including renal proximal tubules.

The protein localises to the apical cell membrane. The protein resides in the endosome lumen. Its subcellular location is the membrane. It is found in the coated pit. It localises to the cell projection. The protein localises to the dendrite. The protein resides in the axon. Functionally, multiligand endocytic receptor. Acts together with CUBN to mediate endocytosis of high-density lipoproteins. Mediates receptor-mediated uptake of polybasic drugs such as aprotinin, aminoglycosides and polymyxin B. In the kidney, mediates the tubular uptake and clearance of leptin. Also mediates transport of leptin across the blood-brain barrier through endocytosis at the choroid plexus epithelium. Endocytosis of leptin in neuronal cells is required for hypothalamic leptin signaling and leptin-mediated regulation of feeding and body weight. Mediates endocytosis and subsequent lysosomal degradation of CST3 in kidney proximal tubule cells. Mediates renal uptake of 25-hydroxyvitamin D3 in complex with the vitamin D3 transporter GC/DBP. Mediates renal uptake of metallothionein-bound heavy metals. Together with CUBN, mediates renal reabsorption of myoglobin. Mediates renal uptake and subsequent lysosomal degradation of APOM. Plays a role in kidney selenium homeostasis by mediating renal endocytosis of selenoprotein SEPP1. Mediates renal uptake of the antiapoptotic protein BIRC5/survivin which may be important for functional integrity of the kidney. Mediates renal uptake of matrix metalloproteinase MMP2 in complex with metalloproteinase inhibitor TIMP1. Mediates endocytosis of Sonic hedgehog protein N-product (ShhN), the active product of SHH. Also mediates ShhN transcytosis. In the embryonic neuroepithelium, mediates endocytic uptake and degradation of BMP4, is required for correct SHH localization in the ventral neural tube and plays a role in patterning of the ventral telencephalon. Required at the onset of neurulation to sequester SHH on the apical surface of neuroepithelial cells of the rostral diencephalon ventral midline and to control PTCH1-dependent uptake and intracellular trafficking of SHH. During neurulation, required in neuroepithelial cells for uptake of folate bound to the folate receptor FOLR1 which is necessary for neural tube closure. In the adult brain, negatively regulates BMP signaling in the subependymal zone which enables neurogenesis to proceed. In astrocytes, mediates endocytosis of ALB which is required for the synthesis of the neurotrophic factor oleic acid. Involved in neurite branching. During optic nerve development, required for SHH-mediated migration and proliferation of oligodendrocyte precursor cells. Mediates endocytic uptake and clearance of SHH in the retinal margin which protects retinal progenitor cells from mitogenic stimuli and keeps them quiescent. Plays a role in reproductive organ development by mediating uptake in reproductive tissues of androgen and estrogen bound to the sex hormone binding protein SHBG. Mediates endocytosis of angiotensin-2. Also mediates endocytosis of angiotensis 1-7. Binds to the complex composed of beta-amyloid protein 40 and CLU/APOJ and mediates its endocytosis and lysosomal degradation. Required for embryonic heart development. Required for normal hearing, possibly through interaction with estrogen in the inner ear. The polypeptide is Low-density lipoprotein receptor-related protein 2 (Homo sapiens (Human)).